The following is a 220-amino-acid chain: Protein GrpE (220 aa).

A disordered region spans residues Met-1–Ser-22.

It belongs to the GrpE family. In terms of assembly, homodimer.

The protein localises to the cytoplasm. Its function is as follows. Participates actively in the response to hyperosmotic and heat shock by preventing the aggregation of stress-denatured proteins, in association with DnaK and GrpE. It is the nucleotide exchange factor for DnaK and may function as a thermosensor. Unfolded proteins bind initially to DnaJ; upon interaction with the DnaJ-bound protein, DnaK hydrolyzes its bound ATP, resulting in the formation of a stable complex. GrpE releases ADP from DnaK; ATP binding to DnaK triggers the release of the substrate protein, thus completing the reaction cycle. Several rounds of ATP-dependent interactions between DnaJ, DnaK and GrpE are required for fully efficient folding. The chain is Protein GrpE from Bartonella henselae (strain ATCC 49882 / DSM 28221 / CCUG 30454 / Houston 1) (Rochalimaea henselae).